A 400-amino-acid polypeptide reads, in one-letter code: tRNA(Ile)-lysidine synthase (400 aa).

Position 20 to 25 (20 to 25 (SGGLDS)) interacts with ATP.

The protein belongs to the tRNA(Ile)-lysidine synthase family.

It localises to the cytoplasm. It carries out the reaction cytidine(34) in tRNA(Ile2) + L-lysine + ATP = lysidine(34) in tRNA(Ile2) + AMP + diphosphate + H(+). Functionally, ligates lysine onto the cytidine present at position 34 of the AUA codon-specific tRNA(Ile) that contains the anticodon CAU, in an ATP-dependent manner. Cytidine is converted to lysidine, thus changing the amino acid specificity of the tRNA from methionine to isoleucine. This chain is tRNA(Ile)-lysidine synthase, found in Wigglesworthia glossinidia brevipalpis.